The primary structure comprises 536 residues: Membrane protein insertase YidC (536 aa).

4 helical membrane passes run 5 to 25, 353 to 373, 418 to 438, and 495 to 515; these read LIIA…IFPT, GNYG…FFPL, VNPL…FGLY, and MLML…GLVI.

Belongs to the OXA1/ALB3/YidC family. Type 1 subfamily. Interacts with the Sec translocase complex via SecD. Specifically interacts with transmembrane segments of nascent integral membrane proteins during membrane integration.

Its subcellular location is the cell inner membrane. Required for the insertion and/or proper folding and/or complex formation of integral membrane proteins into the membrane. Involved in integration of membrane proteins that insert both dependently and independently of the Sec translocase complex, as well as at least some lipoproteins. Aids folding of multispanning membrane proteins. In Geobacter sp. (strain M21), this protein is Membrane protein insertase YidC.